The chain runs to 89 residues: Small ribosomal subunit protein bS20 (89 aa).

A disordered region spans residues 1–26; it reads MANSPQAKKRARQNEKNRKHNASLRS. The segment covering 7–22 has biased composition (basic residues); that stretch reads AKKRARQNEKNRKHNA.

This sequence belongs to the bacterial ribosomal protein bS20 family.

Binds directly to 16S ribosomal RNA. The polypeptide is Small ribosomal subunit protein bS20 (Marinobacter nauticus (strain ATCC 700491 / DSM 11845 / VT8) (Marinobacter aquaeolei)).